The following is a 129-amino-acid chain: Holo-[acyl-carrier-protein] synthase (129 aa).

Mg(2+) is bound by residues Asp8 and Glu58.

Belongs to the P-Pant transferase superfamily. AcpS family. Mg(2+) serves as cofactor.

The protein resides in the cytoplasm. It carries out the reaction apo-[ACP] + CoA = holo-[ACP] + adenosine 3',5'-bisphosphate + H(+). Its function is as follows. Transfers the 4'-phosphopantetheine moiety from coenzyme A to a Ser of acyl-carrier-protein. The chain is Holo-[acyl-carrier-protein] synthase from Acidithiobacillus ferrooxidans (strain ATCC 53993 / BNL-5-31) (Leptospirillum ferrooxidans (ATCC 53993)).